We begin with the raw amino-acid sequence, 156 residues long: Ribosomal RNA large subunit methyltransferase H (156 aa).

S-adenosyl-L-methionine contacts are provided by residues Leu73, Gly104, and 123–128; that span reads LSALTL.

Belongs to the RNA methyltransferase RlmH family. Homodimer.

It localises to the cytoplasm. It carries out the reaction pseudouridine(1915) in 23S rRNA + S-adenosyl-L-methionine = N(3)-methylpseudouridine(1915) in 23S rRNA + S-adenosyl-L-homocysteine + H(+). In terms of biological role, specifically methylates the pseudouridine at position 1915 (m3Psi1915) in 23S rRNA. This Shewanella woodyi (strain ATCC 51908 / MS32) protein is Ribosomal RNA large subunit methyltransferase H.